We begin with the raw amino-acid sequence, 200 residues long: Probable GTP-binding protein EngB (200 aa).

In terms of domain architecture, EngB-type G spans 22 to 197; it reads DLPEIAFAGR…WQAIQDAVEE (176 aa). Residues 30–37, 57–61, 78–81, 145–148, and 176–178 contribute to the GTP site; these read GRSNVGKS, GRTQL, DLPG, TKCD, and FSA. 2 residues coordinate Mg(2+): serine 37 and threonine 59.

Belongs to the TRAFAC class TrmE-Era-EngA-EngB-Septin-like GTPase superfamily. EngB GTPase family. The cofactor is Mg(2+).

Necessary for normal cell division and for the maintenance of normal septation. In Trichlorobacter lovleyi (strain ATCC BAA-1151 / DSM 17278 / SZ) (Geobacter lovleyi), this protein is Probable GTP-binding protein EngB.